Consider the following 134-residue polypeptide: uncharacterized protein (134 aa).

A run of 3 helical transmembrane segments spans residues 26–46, 55–75, and 101–121; these read VAVFLVRAVILLIFAAFGNIG, LLKFSIINIIMLLFGIAQIIV, and YAPMILLLAVNLCGAVFGLIL.

The protein resides in the membrane. This is an uncharacterized protein from Dictyostelium discoideum (Social amoeba).